Here is a 720-residue protein sequence, read N- to C-terminus: DNA gyrase subunit B (720 aa).

Positions 1 to 26 (MVDAMPENPAEEPTAASAAPNPEAVP) are enriched in low complexity. A disordered region spans residues 1 to 42 (MVDAMPENPAEEPTAASAAPNPEAVPDAVGQPEAPVKDRKVP). The Toprim domain occupies 498-612 (CEVYIVEGDS…AGHVFLAQPP (115 aa)). Residues Glu-504, Asp-577, and Asp-579 each contribute to the Mg(2+) site.

It belongs to the type II topoisomerase GyrB family. Heterotetramer, composed of two GyrA and two GyrB chains. In the heterotetramer, GyrA contains the active site tyrosine that forms a transient covalent intermediate with the DNA, while GyrB binds cofactors and catalyzes ATP hydrolysis. Mg(2+) is required as a cofactor. It depends on Mn(2+) as a cofactor. Ca(2+) serves as cofactor.

It localises to the cytoplasm. The catalysed reaction is ATP-dependent breakage, passage and rejoining of double-stranded DNA.. Supercoiling activity inhibited by novobiocin and coumermycin, DNA wrapping around gyrase is not inhibited. Functionally, a type II topoisomerase that negatively supercoils DNA in an ATP-dependent manner. About 140 bp of DNA wraps around gyrase in the presence or absence of ATP, when ATP is added negative supercoils are made. In terms of biological role, a type II topoisomerase that negatively supercoils closed circular double-stranded (ds) DNA in an ATP-dependent manner to modulate DNA topology and maintain chromosomes in an underwound state. Negative supercoiling favors strand separation, and DNA replication, transcription, recombination and repair, all of which involve strand separation. Also able to catalyze the interconversion of other topological isomers of dsDNA rings, including catenanes and knotted rings. Type II topoisomerases break and join 2 DNA strands simultaneously in an ATP-dependent manner. The protein is DNA gyrase subunit B of Micrococcus luteus (strain ATCC 4698 / DSM 20030 / JCM 1464 / CCM 169 / CCUG 5858 / IAM 1056 / NBRC 3333 / NCIMB 9278 / NCTC 2665 / VKM Ac-2230) (Micrococcus lysodeikticus).